Here is a 426-residue protein sequence, read N- to C-terminus: Anaerobic glycerol-3-phosphate dehydrogenase subunit B (426 aa).

Belongs to the anaerobic G-3-P dehydrogenase subunit B family. Composed of a catalytic GlpA/B dimer and of membrane bound GlpC. FMN serves as cofactor.

It carries out the reaction a quinone + sn-glycerol 3-phosphate = dihydroxyacetone phosphate + a quinol. It functions in the pathway polyol metabolism; glycerol degradation via glycerol kinase pathway; glycerone phosphate from sn-glycerol 3-phosphate (anaerobic route): step 1/1. Its function is as follows. Conversion of glycerol 3-phosphate to dihydroxyacetone. Uses fumarate or nitrate as electron acceptor. In Haemophilus ducreyi (strain 35000HP / ATCC 700724), this protein is Anaerobic glycerol-3-phosphate dehydrogenase subunit B.